The chain runs to 577 residues: MESFFVFFTAAALPVVVAAAVIAGLCITAAWLARPRRVAEVFRRQGIDGPPPSSFLAGNLPEMKARVAAAASAAAPTADGEETASAGGGGGGRDFEKDGFDDYCTRIFPYFHKWRKAYGETYLYWLRRRPALYVTDPELIGEIGRCVSLDMGKPKYLQKGQEPLFGGGVLKANGACWARQRKVIAPEFYMARVRAMVQLMVDAAQPLIASWESRIDAAGGAAAAEVVVDGDLRSFSFDVISRACFGSDYSRGREIFLRLRELSGLMSETSVIFSIPSLRHLPTGKNRRIWRLTGEIRSLIMELVRERRCAARAAREHGGKAAPPSPPERDFLGSIIENSGGQPRPDDFVVDNCKNIYFAGHETSAVTATWCLMLLAAHPEWQDRARAEVLEVCGGDGAAAPAAPDFDMVSRMRTVGMVVQETLRLFPPSSFVVRETFRDMQLGRLLAPKGTYLFVPVSTMHHDVAAWGPTARLFDPSRFRDGVAAACKHPQASFMPFGLGARTCLGQNLALVEVKTLVAVVLARFEFTLSPEYRHSPAFRLIIEPEFGLRLRIRRAGGQDATSQVDTSTAPVHSSHN.

Topologically, residues 1–3 are lumenal; that stretch reads MES. The chain crosses the membrane as a helical; Signal-anchor for type III membrane protein span at residues 4 to 24; the sequence is FFVFFTAAALPVVVAAAVIAG. At 25-577 the chain is on the cytoplasmic side; it reads LCITAAWLAR…STAPVHSSHN (553 aa). The interval 315-343 is disordered; it reads REHGGKAAPPSPPERDFLGSIIENSGGQP. Heme is bound at residue cysteine 504.

This sequence belongs to the cytochrome P450 family. The cofactor is heme. In terms of tissue distribution, expressed in rapidly elongating or dividing tissues, including the shoot apical meristem, the intercalary meristem and elongating zones of internodes, and panicle but not in young seedlings, roots and leaves. During the heading stage, the highest expression is detected in the flowering spikelets, anthers, the divisional zone and the node of the uppermost internode.

The protein localises to the endoplasmic reticulum membrane. Its function is as follows. Catalyzes the 16alpha,17-epoxidation on non-13-hydroxylated gibberellins (GAs), including GA4, GA9, and GA12. No activity with GA1, GA20, GA53 or ent-kaurenoic acid. Reduces the biological activity of GAs. The chain is Cytochrome P450 714D1 (CYP714D1) from Oryza sativa subsp. japonica (Rice).